Consider the following 535-residue polypeptide: MAELPTAPNGVPSGDYLHRSIDQLRSLGHLTTAQLVHDYKPFNISEFRQNVAERLDYSLKNGLVQHQQQMVMEQQPHPDQQQQQHLHHPQQQQHPPQLKVSYSAPNSPPTPHEQQEQKYDPNRSPPRQQMSSASGSGSNGSSPEEESRRGDGDQAKPYKCGSCSKSFANSSYLSQHTRIHLGIKPYRCEICQRKFTQLSHLQQHIRTHTGDKPYKCRHAGCPKAFSQLSNLQSHSRCHQTDKPFKCNSCYKCFSDEMTLLEHIPKHKDSKHLKTHICNLCGKSYTQETYLQKHLQKHAEKAEKQQHRHTAQVAAHQQHVPASGIGLNLQRQAMNDVNAAYWAKMGADSAAASLAEAIQQQLPQAGGQPYGNFASLQQQHQQQQQELLHHQRLADTPGHSHSPHEEAAGEDLVLRQSTPQHHLQQQQQQQQQQQAQQQQQAQHQPSPGPGNSAFTPLSATVAPPPHLQQHRGPPGSAAAYLYQQNAAAAAAAFPTQLISLHQIRNYAHQPGAAGLIAGDHLALGLSAVNAAKEKAQ.

Low complexity-rich tracts occupy residues methionine 70–glutamine 97 and serine 131–serine 142. Positions methionine 70–proline 157 are disordered. Residues glutamate 145–lysine 156 show a composition bias toward basic and acidic residues. C2H2-type zinc fingers lie at residues tyrosine 158–histidine 180, tyrosine 186–histidine 208, tyrosine 214–histidine 238, phenylalanine 244–histidine 266, and histidine 275–histidine 297. Threonine 395 is subject to Phosphothreonine. 2 positions are modified to phosphoserine: serine 399 and serine 401. The interval threonine 417–serine 475 is disordered. Low complexity predominate over residues glutamine 419 to glutamine 443. Phosphoserine is present on serine 475. Phosphotyrosine is present on residues tyrosine 479 and tyrosine 481.

This sequence belongs to the krueppel C2H2-type zinc-finger protein family. In terms of assembly, interacts with nab; which acts as a coactivator. Interacts with ap. In terms of tissue distribution, largely restricted to subsets of cells in the CNS throughout embryonic and first instar larval (L1) development. Expressed in a population of lateral interneurons, primarily projecting axons in the anterior and posterior commissures. Overlaps with ap within the thoracic ap cluster. By stage 17, it is restricted to 2 neurons within the ap-cluster, with one neuron typically continuing to display higher levels of expression. Selectively expressed at higher levels within the FMRFa Tv neurons. Expressed in all leucokinergic cells.

It localises to the nucleus. Functionally, transcription factor involved in neuronal fate specification. First required in embryonic CNS development to define the number of cells that express apterous (ap) in the ap thoracic cluster of interneurons. Later on, it plays a central role in the combinatorial code of transcription factors that specifies the fate of the Tv neuron in the ap cluster by participating in the transcription regulation of FMRFa in Tv cells. Also required for projection neuron dendritic targeting. The protein is Zinc finger protein squeeze (sqz) of Drosophila melanogaster (Fruit fly).